The chain runs to 223 residues: MEVKIEESWKEILKAEFCKGYFKRLVNFIKNEYKTKKGKIFPPPKLIFNAFDSLPFKDIKVVILGQDPYHGKRQANGLAFSVNSDIKIPPSLQNIFKEIERSLKIQTIPNGDLTRWATQGVFLLNSILTVEESRPSSHKDIGWEIFTNEVIKIISKNLNNIVFMLWGNFARGKKELIDASRHLILETSHPSPYSAHNGFLGSNHFSQALRYLKEHNKSPIDFQ.

The Proton acceptor role is filled by aspartate 67.

Belongs to the uracil-DNA glycosylase (UDG) superfamily. UNG family.

Its subcellular location is the cytoplasm. The catalysed reaction is Hydrolyzes single-stranded DNA or mismatched double-stranded DNA and polynucleotides, releasing free uracil.. Functionally, excises uracil residues from the DNA which can arise as a result of misincorporation of dUMP residues by DNA polymerase or due to deamination of cytosine. In Borrelia hermsii (strain HS1 / DAH), this protein is Uracil-DNA glycosylase.